We begin with the raw amino-acid sequence, 1273 residues long: Kinesin-like protein KIN-7O (1273 aa).

Residues 3 to 327 (RIHVSVRARP…LQFASRALRV (325 aa)) enclose the Kinesin motor domain. Residue 79-86 (GQTNSGKT) coordinates ATP. Positions 333-408 (VNEILTDAAL…QRERVLQEQA (76 aa)) form a coiled coil. The tract at residues 452-474 (SEDQSNVLSRGSSLESARSERET) is disordered. The segment covering 453-467 (EDQSNVLSRGSSLES) has biased composition (polar residues). Coiled-coil stretches lie at residues 602–674 (EAIL…ESEV) and 751–1023 (VQSS…MEEE).

The protein belongs to the TRAFAC class myosin-kinesin ATPase superfamily. Kinesin family. KIN-7 subfamily.

This chain is Kinesin-like protein KIN-7O, found in Arabidopsis thaliana (Mouse-ear cress).